We begin with the raw amino-acid sequence, 601 residues long: Uptake hydrogenase large subunit (601 aa).

4 residues coordinate Ni(2+): Cys-74, Cys-77, Cys-580, and Cys-583.

Belongs to the [NiFe]/[NiFeSe] hydrogenase large subunit family. In terms of assembly, heterodimer of a large and a small subunit. Ni(2+) serves as cofactor.

It is found in the cell membrane. It catalyses the reaction H2 + A = AH2. Functionally, this enzyme recycles the H(2) produced by nitrogenase to increase the production of ATP and to protect nitrogenase against inhibition or damage by O(2) under carbon- or phosphate-limited conditions. The sequence is that of Uptake hydrogenase large subunit (hupL) from Azotobacter chroococcum mcd 1.